A 103-amino-acid chain; its full sequence is Protein S100-A16 (103 aa).

Positions 12–47 constitute an EF-hand 1; degenerate domain; that stretch reads VIVLVENFYKYVSKYSLVKNKISKSSFREMLQKELN. Residues 54–89 form the EF-hand 2 domain; sequence GNRKAADKLIQNLDANHDGRISFDEYWTLIGGITGP. Residues Asp67, Asn69, Asp71, Arg73, and Glu78 each contribute to the Ca(2+) site.

It belongs to the S-100 family. Homodimer. Interacts with TP53. As to expression, ubiquitous. Highly expressed in esophagus, adipose tissues and colon. Expressed at lower level in lung, brain, pancreas and skeletal muscle. Expression is up-regulated in tumors of bladder, lung, thyroid gland, pancreas and ovary. Expressed in astrocytes.

It localises to the nucleus. The protein resides in the nucleolus. The protein localises to the cytoplasm. In terms of biological role, calcium-binding protein. Binds one calcium ion per monomer. Can promote differentiation of adipocytes (in vitro). Overexpression in preadipocytes increases their proliferation, enhances adipogenesis and reduces insulin-stimulated glucose uptake. This chain is Protein S100-A16, found in Homo sapiens (Human).